The following is a 464-amino-acid chain: Sensor protein IrlS (464 aa).

Residues 1–13 (MIRRLLPRTLRAR) are Periplasmic-facing. The chain crosses the membrane as a helical span at residues 14–34 (LTALIILSTAATLALSGVALY). Topologically, residues 35–166 (SALHNRLVGM…DHALLRAYAY (132 aa)) are cytoplasmic. The chain crosses the membrane as a helical span at residues 167 to 187 (TVVVIEVLAVVLTAALAYGIA). The HAMP domain maps to 188 to 241 (MLGLSPLRRLVARAEQMSSSRLAQPLPELDTSGELKEMEHAFNAMLKRLDESFV). The Periplasmic portion of the chain corresponds to 188 to 464 (MLGLSPLRRL…FWLKFPAHAA (277 aa)). In terms of domain architecture, Histidine kinase spans 249–463 (NLAHDMRTPL…TFWLKFPAHA (215 aa)). Position 252 is a phosphohistidine; by autocatalysis (histidine 252).

It is found in the cell inner membrane. The enzyme catalyses ATP + protein L-histidine = ADP + protein N-phospho-L-histidine.. Its function is as follows. Member of the two-component regulatory system IrlR/IrlS. May be involved in invasion of eukaryotic cells and heavy-metal resistance. Probably activates IrlR by phosphorylation. The sequence is that of Sensor protein IrlS (irlS) from Burkholderia pseudomallei (strain K96243).